We begin with the raw amino-acid sequence, 362 residues long: Abnormal cell migration protein 13 (362 aa).

An N-terminal signal peptide occupies residues 1 to 20 (MTKLLIALILFSICWKPYSA). Topologically, residues 21–237 (EPIASFFDGL…ELDPLTTVSG (217 aa)) are extracellular. 2 disulfide bridges follow: cysteine 36/cysteine 68 and cysteine 98/cysteine 136. The 140-residue stretch at 36 to 175 (CKARLDRRLT…KGFKLHWGSF (140 aa)) folds into the CUB domain. N-linked (GlcNAc...) asparagine glycosylation occurs at asparagine 63. Asparagine 145 and asparagine 161 each carry an N-linked (GlcNAc...) asparagine glycan. One can recognise an LDL-receptor class A domain in the interval 182–225 (NCVTGEFSCGNGECIPIESACDRFADCSNGEDLIHSRQMAANCQ). 3 disulfides stabilise this stretch: cysteine 183-cysteine 195, cysteine 190-cysteine 208, and cysteine 202-cysteine 224. A helical transmembrane segment spans residues 238 to 258 (VFVLLFSATIILSLCGFIMFV). Topologically, residues 259–362 (CCLCKCLKST…VRNDVHRNLL (104 aa)) are cytoplasmic. Positions 275–311 (SSHTTTTTATDYKPDPPQFYPPSPPKMPPPSAASSYT) are disordered. The span at 289 to 305 (DPPQFYPPSPPKMPPPS) shows a compositional bias: pro residues.

In terms of assembly, interacts with abl-1 (via SH2 and SH3 domains); the interaction is direct. Interacts with sem-5; the interaction is direct. Expressed in pharyngeal-intestinal valve cells and ventral cord neurons.

The protein localises to the cell membrane. It localises to the perikaryon. The protein resides in the cell projection. Its subcellular location is the axon. It is found in the dendrite. Its function is as follows. Probable receptor that acts as an upstream signaling protein to promote the guidance, migration and positioning of the right Q neuroblast (QR) and its descendants along the anteroposterior body axis, and also the anterior migration of BDU interneurons during larval development. Associates with and recruits the downstream components tyrosine kinase abl-1 and the tyrosine kinase adapter protein sem-5 to the leading edge of migrating Q neuroblasts and their descendants to activate signaling through the two parallel wve-1 and wsp-1 pathways, respectively, and direct migration along the anteroposterior body axis. Involved in cytoskeleton dynamics regulating the organization of the actin cytoskeleton at the leading edge of migrating cells to ensure correct Q cell polarity and promote migration. Role in cytoskeleton organization may be by activation of the wve-1 and wsp-1 pathways which recruit the Arp2/3 complex to the leading edge of migrating cells. Plays a role in regulating the asymmetric distribution of the actin cytoskeleton-binding protein cor-1 in Q neuroblasts which is required for the anterior migration of QR neuroblasts. In Caenorhabditis elegans, this protein is Abnormal cell migration protein 13.